Consider the following 464-residue polypeptide: 3-isopropylmalate dehydratase large subunit (464 aa).

[4Fe-4S] cluster contacts are provided by cysteine 345, cysteine 405, and cysteine 408.

It belongs to the aconitase/IPM isomerase family. LeuC type 1 subfamily. Heterodimer of LeuC and LeuD. It depends on [4Fe-4S] cluster as a cofactor.

It carries out the reaction (2R,3S)-3-isopropylmalate = (2S)-2-isopropylmalate. The protein operates within amino-acid biosynthesis; L-leucine biosynthesis; L-leucine from 3-methyl-2-oxobutanoate: step 2/4. Functionally, catalyzes the isomerization between 2-isopropylmalate and 3-isopropylmalate, via the formation of 2-isopropylmaleate. The polypeptide is 3-isopropylmalate dehydratase large subunit (Bacteroides fragilis (strain ATCC 25285 / DSM 2151 / CCUG 4856 / JCM 11019 / LMG 10263 / NCTC 9343 / Onslow / VPI 2553 / EN-2)).